The chain runs to 87 residues: Large ribosomal subunit protein bL31B (87 aa).

It belongs to the bacterial ribosomal protein bL31 family. Type B subfamily. As to quaternary structure, part of the 50S ribosomal subunit.

The chain is Large ribosomal subunit protein bL31B from Burkholderia pseudomallei (strain 1106a).